A 196-amino-acid chain; its full sequence is Transcription repressor OFP10 (196 aa).

Residues 100 to 159 (MAKESINPFEDYKKSMNQMIEERYIETESELKELLRCFLDINPSPQHNLIVRAFVDVCSH) form the OVATE domain.

In terms of tissue distribution, expressed in roots, cauline leaves, shoots, stems, flower buds and siliques.

It is found in the nucleus. Transcriptional repressor that may regulate multiple aspects of plant growth and development through the regulation of BEL1-LIKE (BLH) and KNOX TALE (KNAT) homeodomain transcription factors. This Arabidopsis thaliana (Mouse-ear cress) protein is Transcription repressor OFP10 (OFP10).